Reading from the N-terminus, the 233-residue chain is Probable transglycosylase IsaA (233 aa).

The N-terminal stretch at 1–29 (MKKTIMASSLAVALGVTGYAAGTGHQAHA) is a signal peptide.

The protein belongs to the transglycosylase family. IsaA subfamily.

It is found in the secreted. Its function is as follows. Is able to cleave peptidoglycan. In Staphylococcus aureus (strain USA300), this protein is Probable transglycosylase IsaA (isaA).